The following is a 233-amino-acid chain: Lipoprotein-releasing system ATP-binding protein LolD (233 aa).

Residues Leu-6 to Glu-233 form the ABC transporter domain. Gly-42–Ser-49 provides a ligand contact to ATP.

The protein belongs to the ABC transporter superfamily. Lipoprotein translocase (TC 3.A.1.125) family. In terms of assembly, the complex is composed of two ATP-binding proteins (LolD) and two transmembrane proteins (LolC and LolE).

The protein resides in the cell inner membrane. Functionally, part of the ABC transporter complex LolCDE involved in the translocation of mature outer membrane-directed lipoproteins, from the inner membrane to the periplasmic chaperone, LolA. Responsible for the formation of the LolA-lipoprotein complex in an ATP-dependent manner. This is Lipoprotein-releasing system ATP-binding protein LolD from Shigella boydii serotype 4 (strain Sb227).